Reading from the N-terminus, the 596-residue chain is Chloride intracellular channel protein 6 (596 aa).

A disordered region spans residues 1 to 360; the sequence is MAEATEPKEV…ALEEGDPGQE (360 aa). Residues 34-48 are compositionally biased toward basic and acidic residues; sequence LEGREASEEAAEAPR. S40 carries the phosphoserine modification. Positions 65-74 are enriched in gly residues; sequence GCGQDEGTGG. Over residues 83 to 98 the composition is skewed to low complexity; the sequence is GPEAETPGASGAPGEA. Polar residues predominate over residues 118-130; sequence SAQQVQGMSSGLD. The span at 148-160 shows a compositional bias: acidic residues; the sequence is DPTASEAGEEAES. Composition is skewed to low complexity over residues 197–213 and 225–244; these read GSES…PQPQ and GGNE…AGEG. Residues 246-290 are compositionally biased toward basic and acidic residues; sequence TLGKDGSEEAASEDARVDAHENGDQGKLQEETGEEEARPEPELKG. S304 carries the post-translational modification Phosphoserine. Positions 338 to 348 are enriched in basic and acidic residues; the sequence is ELGRVNGRREN. The G-site motif lies at 379-382; sequence CPFS. A helical membrane pass occupies residues 381 to 401; the sequence is FSQRLFMILWLKGVIFNVTTV. The 172-residue stretch at 425-596 folds into the GST C-terminal domain; it reads DGEVKTDVNK…AYSDAAKRMK (172 aa).

The protein belongs to the chloride channel CLIC family. Monomer (soluble state). Interacts with dopamine receptors DRD2, DRD3 and DRD4. In terms of processing, phosphorylated.

The protein localises to the cytoplasm. It localises to the cell membrane. The enzyme catalyses chloride(in) = chloride(out). With respect to regulation, channel activity is redox- and pH-regulated. Inhibited by IAA-94. Functionally, in the soluble state, catalyzes glutaredoxin-like thiol disulfide exchange reactions with reduced glutathione as electron donor. Can insert into membranes and form voltage-dependent chloride-selective channels. The channel opens upon membrane depolarization at positive voltages and closes at negative membrane voltages. May play a critical role in water-secreting cells, possibly through the regulation of chloride ion transport. The chain is Chloride intracellular channel protein 6 (Clic6) from Mus musculus (Mouse).